The sequence spans 564 residues: Sphingomyelin phosphodiesterase 1 (564 aa).

The signal sequence occupies residues 1-17 (MRIIYLISTVLLIYTNA). In terms of domain architecture, Saposin B-type spans 37–121 (FQPLCISCTG…IILPDCADPT (85 aa)). 3 cysteine pairs are disulfide-bonded: cysteine 41–cysteine 117, cysteine 44–cysteine 110, and cysteine 72–cysteine 83. N-linked (GlcNAc...) asparagine glycosylation is present at asparagine 151. Zn(2+) contacts are provided by aspartate 165 and histidine 167. 2 cysteine pairs are disulfide-bonded: cysteine 180-cysteine 185 and cysteine 186-cysteine 206. Asparagine 221 carries an N-linked (GlcNAc...) asparagine glycan. Residues aspartate 234 and asparagine 274 each coordinate Zn(2+). Cysteine 341 and cysteine 389 are disulfide-bonded. An N-linked (GlcNAc...) asparagine glycan is attached at asparagine 351. Residues histidine 381, histidine 415, and histidine 417 each contribute to the Zn(2+) site. The N-linked (GlcNAc...) asparagine glycan is linked to asparagine 430. Disulfide bonds link cysteine 538–cysteine 542 and cysteine 548–cysteine 561. N-linked (GlcNAc...) asparagine glycosylation is present at asparagine 556.

Belongs to the acid sphingomyelinase family. Zn(2+) serves as cofactor.

The protein localises to the secreted. The enzyme catalyses a sphingomyelin + H2O = phosphocholine + an N-acylsphing-4-enine + H(+). It carries out the reaction an N-acyl-15-methylhexadecasphing-4-enine-1-phosphocholine + H2O = an N-acyl-15-methylhexadecasphing-4-enine + phosphocholine + H(+). It functions in the pathway lipid metabolism; sphingolipid metabolism. Sphingomyelin phosphodiesterase (sphingomyelinase) that converts sphingomyelin to ceramide (N-acyl-sphingoid base) and phosphocholine at acidic pH. Displays its enzymatic activity when secreted. May play distinct roles in signaling. This chain is Sphingomyelin phosphodiesterase 1 (asm-1), found in Caenorhabditis elegans.